Consider the following 453-residue polypeptide: Chromosomal replication initiator protein DnaA (453 aa).

The segment at 1–71 (MSEKEIWEKV…QAILFDVVGY (71 aa)) is domain I, interacts with DnaA modulators. The segment at 71–114 (YEVKPHFITTEELANYSNNETATPKETTKPSTETTEDNHVLGRE) is domain II. Positions 115–331 (QFNAHNTFDT…GALTRLLAYS (217 aa)) are domain III, AAA+ region. Residues Gly-159, Gly-161, Lys-162, and Thr-163 each contribute to the ATP site. The domain IV, binds dsDNA stretch occupies residues 332-453 (QLLGKPITTE…ENLEKEIRNV (122 aa)).

Belongs to the DnaA family. In terms of assembly, oligomerizes as a right-handed, spiral filament on DNA at oriC.

It is found in the cytoplasm. Plays an essential role in the initiation and regulation of chromosomal replication. ATP-DnaA binds to the origin of replication (oriC) to initiate formation of the DNA replication initiation complex once per cell cycle. Binds the DnaA box (a 9 base pair repeat at the origin) and separates the double-stranded (ds)DNA. Forms a right-handed helical filament on oriC DNA; dsDNA binds to the exterior of the filament while single-stranded (ss)DNA is stabiized in the filament's interior. The ATP-DnaA-oriC complex binds and stabilizes one strand of the AT-rich DNA unwinding element (DUE), permitting loading of DNA polymerase. After initiation quickly degrades to an ADP-DnaA complex that is not apt for DNA replication. Binds acidic phospholipids. In Staphylococcus aureus (strain Mu3 / ATCC 700698), this protein is Chromosomal replication initiator protein DnaA.